Reading from the N-terminus, the 180-residue chain is MSIEVSNESGMDVSEEELISVARFVIARMDVHPAAELSMVLVDSATMADLHMRWMDLPGPTDVMSFPMDELEPGGRPDSPEPGPSMLGDIVLCPSFAADQAEKAGHPLAHELALLTVHGVLHLLGYDHAEPEEEKEMFGLQNQLLDDWYEDLRRAERDAALAARDQKLLGKAGFFDAPDQ.

Histidine 118, histidine 122, and histidine 128 together coordinate Zn(2+).

It belongs to the endoribonuclease YbeY family. Zn(2+) is required as a cofactor.

The protein resides in the cytoplasm. Functionally, single strand-specific metallo-endoribonuclease involved in late-stage 70S ribosome quality control and in maturation of the 3' terminus of the 16S rRNA. The chain is Endoribonuclease YbeY from Rhodococcus opacus (strain B4).